The primary structure comprises 91 residues: Sec-independent protein translocase protein TatA (91 aa).

Residues 1-21 (MGIFDWKHWIVILIVVVLVFG) traverse the membrane as a helical segment. Residues 41–91 (KAMNDDDKPAEQPAPQPQQAQPAPQGSPLNQPHTIDAQAHKVDEPIRKDQV) are disordered. Over residues 51–64 (EQPAPQPQQAQPAP) the composition is skewed to low complexity. The span at 78–91 (QAHKVDEPIRKDQV) shows a compositional bias: basic and acidic residues.

The protein belongs to the TatA/E family. In terms of assembly, the Tat system comprises two distinct complexes: a TatABC complex, containing multiple copies of TatA, TatB and TatC subunits, and a separate TatA complex, containing only TatA subunits. Substrates initially bind to the TatABC complex, which probably triggers association of the separate TatA complex to form the active translocon.

It is found in the cell inner membrane. Its function is as follows. Part of the twin-arginine translocation (Tat) system that transports large folded proteins containing a characteristic twin-arginine motif in their signal peptide across membranes. TatA could form the protein-conducting channel of the Tat system. The polypeptide is Sec-independent protein translocase protein TatA (Pseudomonas syringae pv. syringae (strain B728a)).